The primary structure comprises 316 residues: Cytochrome c biogenesis protein CcsA (316 aa).

Transmembrane regions (helical) follow at residues 19-39, 47-67, 77-97, 106-126, 151-171, 224-244, 258-275, and 285-305; these read VLTL…FSFW, SSIV…QLVF, ISNL…IQLL, LIQA…SFVL, VIMC…VVLL, TITF…VWAN, TWAF…HTRL, and AIIA…VNFL.

The protein belongs to the CcmF/CycK/Ccl1/NrfE/CcsA family. In terms of assembly, may interact with ccs1.

Its subcellular location is the cellular thylakoid membrane. In terms of biological role, required during biogenesis of c-type cytochromes (cytochrome c6 and cytochrome f) at the step of heme attachment. This chain is Cytochrome c biogenesis protein CcsA, found in Prochlorococcus marinus (strain SARG / CCMP1375 / SS120).